The sequence spans 421 residues: Mitochondrial distribution and morphology protein 10 (421 aa).

Belongs to the MDM10 family. In terms of assembly, component of the ER-mitochondria encounter structure (ERMES) or MDM complex, composed of MMM1, MDM10, MDM12 and MDM34. Associates with the mitochondrial outer membrane sorting assembly machinery SAM(core) complex.

The protein resides in the mitochondrion outer membrane. Its function is as follows. Component of the ERMES/MDM complex, which serves as a molecular tether to connect the endoplasmic reticulum and mitochondria. Components of this complex are involved in the control of mitochondrial shape and protein biogenesis and may function in phospholipid exchange. MDM10 is involved in the late assembly steps of the general translocase of the mitochondrial outer membrane (TOM complex). Functions in the TOM40-specific route of the assembly of outer membrane beta-barrel proteins, including the association of TOM40 with the receptor TOM22 and small TOM proteins. Can associate with the SAM(core) complex as well as the MDM12-MMM1 complex, both involved in late steps of the major beta-barrel assembly pathway, that is responsible for biogenesis of all outer membrane beta-barrel proteins. May act as a switch that shuttles between both complexes and channels precursor proteins into the TOM40-specific pathway. Plays a role in mitochondrial morphology and in the inheritance of mitochondria. The protein is Mitochondrial distribution and morphology protein 10 of Vanderwaltozyma polyspora (strain ATCC 22028 / DSM 70294 / BCRC 21397 / CBS 2163 / NBRC 10782 / NRRL Y-8283 / UCD 57-17) (Kluyveromyces polysporus).